The following is a 442-amino-acid chain: Putative FNIP repeat-containing protein L170 (442 aa).

FNIP repeat units lie at residues 213 to 252, 253 to 294, and 295 to 348; these read FNSSINSLRNNIRVLKLGNSFNKPIDILPELLEELYIGRG, FNSE…LGCF, and FNQS…FGMY.

This Acanthamoeba polyphaga mimivirus (APMV) protein is Putative FNIP repeat-containing protein L170.